The sequence spans 180 residues: Bifunctional protein PyrR 1 (180 aa).

Substrate contacts are provided by residues 39 to 40, 103 to 111, Arg136, and Val160; these read TR and DDVLFTGRT. The PRPP-binding motif lies at 99 to 111; the sequence is VILVDDVLFTGRT.

This sequence belongs to the purine/pyrimidine phosphoribosyltransferase family. PyrR subfamily. As to quaternary structure, homodimer and homohexamer; in equilibrium.

It carries out the reaction UMP + diphosphate = 5-phospho-alpha-D-ribose 1-diphosphate + uracil. In terms of biological role, regulates transcriptional attenuation of the pyrimidine nucleotide (pyr) operon by binding in a uridine-dependent manner to specific sites on pyr mRNA. This disrupts an antiterminator hairpin in the RNA and favors formation of a downstream transcription terminator, leading to a reduced expression of downstream genes. Functionally, also displays a weak uracil phosphoribosyltransferase activity which is not physiologically significant. In Lactiplantibacillus plantarum (strain ATCC BAA-793 / NCIMB 8826 / WCFS1) (Lactobacillus plantarum), this protein is Bifunctional protein PyrR 1 (pyrR1).